A 161-amino-acid chain; its full sequence is Arachidonate 5-lipoxygenase-activating protein (161 aa).

The Lumenal portion of the chain corresponds to 1 to 8 (MDQETVGN). Residues 9–30 (VVLLAIVTLISVVQNGFFAHKV) traverse the membrane as a helical segment. At 31 to 52 (EHESRTQNGRSFQRTGTLAFER) the chain is on the cytoplasmic side. The helical transmembrane segment at 53-77 (VYTANQNCVDAYPTFLAVLWSAGLL) threads the bilayer. Residues 78 to 80 (CSQ) are Lumenal-facing. The helical transmembrane segment at 81-102 (VPAAFAGLMYLLVRQKYFVGYL) threads the bilayer. Over 103-107 (GERTQ) the chain is Cytoplasmic. An intramembrane segment occupies 108-115 (STPGYIFG). Residues 116–128 (KRIILFLFLMSVA) form a helical membrane-spanning segment. Over 129–161 (GIFNYYLIFFFGSDFENYIKTVTTTISPLLLIP) the chain is Lumenal.

The protein belongs to the MAPEG family. In terms of assembly, homotrimer. Interacts with LTC4S and ALOX5.

The protein localises to the nucleus membrane. The protein resides in the endoplasmic reticulum membrane. In terms of biological role, required for leukotriene biosynthesis by ALOX5 (5-lipoxygenase). Anchors ALOX5 to the membrane. Binds arachidonic acid, and could play an essential role in the transfer of arachidonic acid to ALOX5. Binds to MK-886, a compound that blocks the biosynthesis of leukotrienes. This Macaca fascicularis (Crab-eating macaque) protein is Arachidonate 5-lipoxygenase-activating protein (ALOX5AP).